An 814-amino-acid polypeptide reads, in one-letter code: DNA ligase (814 aa).

NAD(+) is bound by residues 46 to 50 (DAEYD), 95 to 96 (SL), and Glu-129. Lys-131 acts as the N6-AMP-lysine intermediate in catalysis. Residues Arg-152, Glu-189, Lys-305, and Lys-329 each contribute to the NAD(+) site. Zn(2+) contacts are provided by Cys-434, Cys-437, Cys-458, and Cys-464. Residues 526–549 (SAQRRTEGEPAPKKPTKKKGEEED) are disordered. The 80-residue stretch at 735–814 (TSAAAFAGKT…DDWLAMLAEA (80 aa)) folds into the BRCT domain.

The protein belongs to the NAD-dependent DNA ligase family. LigA subfamily. It depends on Mg(2+) as a cofactor. The cofactor is Mn(2+).

It catalyses the reaction NAD(+) + (deoxyribonucleotide)n-3'-hydroxyl + 5'-phospho-(deoxyribonucleotide)m = (deoxyribonucleotide)n+m + AMP + beta-nicotinamide D-nucleotide.. In terms of biological role, DNA ligase that catalyzes the formation of phosphodiester linkages between 5'-phosphoryl and 3'-hydroxyl groups in double-stranded DNA using NAD as a coenzyme and as the energy source for the reaction. It is essential for DNA replication and repair of damaged DNA. In Methylorubrum extorquens (strain CM4 / NCIMB 13688) (Methylobacterium extorquens), this protein is DNA ligase.